Consider the following 416-residue polypeptide: MQYMKSLAHPDEFLSLLKIGYTESFKPKSQLKENLGNKEWCYELLNKTSRSFAFVINELEPSLKDAICIFYLVLRGLDTIEDDTTVELNTKLPVLTSFSEGLYQPGYKVFGYGMNNDEKNLVENFDKVVDVFLGLGDGYCTIIHDITRRMANGMSEFLQKSVVTLPEWDLYCHYVAGLVGIGLSKIFHASGLESEWFATADDESNQMGLFLQKTNIIRDYLEDINEKRIFWPRDVWARYTLHLENFKEAKYQIPALHCLNDLITNALSHALIALDYMSRLKNPQVINFCAIPQVMAIGTLNACYNNYNVFTGVVKIRKGQRALIVDAIQSKGLTATYELFFKFANEMRHKVPPNDPSAKKTIQHLESIEKLCIEKLGYRPSGFNDFISYDWMAVTSLAVSSAFLIARHGPNFFSKL.

The next 2 membrane-spanning stretches (helical) occupy residues Val285–Tyr304 and Phe386–Ala406.

Belongs to the phytoene/squalene synthase family. Requires Mg(2+) as cofactor.

It localises to the endoplasmic reticulum membrane. The catalysed reaction is 2 (2E,6E)-farnesyl diphosphate + NADPH + H(+) = squalene + 2 diphosphate + NADP(+). It catalyses the reaction 2 (2E,6E)-farnesyl diphosphate + NADH + H(+) = squalene + 2 diphosphate + NAD(+). The protein operates within terpene metabolism; lanosterol biosynthesis; lanosterol from farnesyl diphosphate: step 1/3. The sequence is that of Squalene synthase (fdfT) from Dictyostelium discoideum (Social amoeba).